The primary structure comprises 752 residues: Myb-related protein A (752 aa).

Residues 1 to 22 form a disordered region; sequence MAKRSRSEDEDDDLQYADHDYE. 3 consecutive HTH myb-type domains span residues 30-81, 82-137, and 138-188; these read KKLW…QKVL, NPEL…NPEV, and KKSS…RRKV. 3 consecutive DNA-binding regions (H-T-H motif) follow at residues 58 to 81, 110 to 133, and 161 to 184; these read WTLIASHLQNRSDFQCQHRWQKVL, WSLIAKHLKGRIGKQCRERWHNHL, and WAEIAKLLPGRTDNSIKNHWNSTM. A Glycyl lysine isopeptide (Lys-Gly) (interchain with G-Cter in SUMO2) cross-link involves residue Lys-199. Positions 230-295 are transcriptional activation domain; the sequence is IPGYQYVSPE…RIPSQPGSFS (66 aa). Residues 298-553 are negative regulatory domain; it reads SGSFLMDDNM…IRRSILGTTP (256 aa). N6-acetyllysine is present on Lys-394. Positions 451 to 480 are disordered; it reads RKMRVGHSPGSELRDGSLNDGGNMALKHTP. Residues Lys-592 and Lys-602 each participate in a glycyl lysine isopeptide (Lys-Gly) (interchain with G-Cter in SUMO2) cross-link.

In terms of assembly, component of the DREAM complex (also named LINC complex) at least composed of E2F4, E2F5, LIN9, LIN37, LIN52, LIN54, MYBL1, MYBL2, RBL1, RBL2, RBBP4, TFDP1 and TFDP2. The complex exists in quiescent cells where it represses cell cycle-dependent genes. It dissociates in S phase when LIN9, LIN37, LIN52 and LIN54 form a subcomplex that binds to MYBL2. As to expression, expressed in a variety of lymphoid and solid tumor lines cultured in vitro.

The protein resides in the nucleus. Transcription factor that specifically recognizes the sequence 5'-YAAC[GT]G-3'. Acts as a master regulator of male meiosis by promoting expression of piRNAs: activates expression of both piRNA precursor RNAs and expression of protein-coding genes involved in piRNA metabolism. The piRNA metabolic process mediates the repression of transposable elements during meiosis by forming complexes composed of piRNAs and Piwi proteins and governs the methylation and subsequent repression of transposons, which is essential for the germline integrity. Transcriptional activator of SOX30. This chain is Myb-related protein A (MYBL1), found in Homo sapiens (Human).